The following is a 429-amino-acid chain: Tyrosine-protein kinase STYK1 (429 aa).

A helical membrane pass occupies residues Val30 to Trp50. A disordered region spans residues Ser58 to Gly83. The Protein kinase domain maps to Leu119–Ala390. Residues Ile125 to Leu133 and Lys152 contribute to the ATP site. Asp256 serves as the catalytic Proton acceptor.

It belongs to the protein kinase superfamily. Tyr protein kinase family. Highly expressed in colon and small intestine. Weakly or not expressed in spleen, skeletal muscle, liver, kidney, heart and brain. Expressed in transformed kidney cell lines (COS-1 and HEK293T).

It localises to the membrane. It catalyses the reaction L-tyrosyl-[protein] + ATP = O-phospho-L-tyrosyl-[protein] + ADP + H(+). In terms of biological role, probable tyrosine protein-kinase, which has strong transforming capabilities on a variety of cell lines including NIH 3T3 fibroblasts and on athymic nude mice. When overexpressed, it can also induce tumor cell invasion as well as metastasis in distant organs. May act by activating both MAP kinase and phosphatidylinositol 3'-kinases (PI3K) pathways. This is Tyrosine-protein kinase STYK1 (Styk1) from Mus musculus (Mouse).